A 60-amino-acid chain; its full sequence is Cytochrome c oxidase subunit 7, mitochondrial (60 aa).

Residues 2–29 (ANKVIQLQKIFQSSTKPLWWRHPRSALY) lie on the Mitochondrial matrix side of the membrane. A helical transmembrane segment spans residues 30-53 (LYPFYAIFAVAVVTPLLYIPNAIR). The Mitochondrial intermembrane portion of the chain corresponds to 54–60 (GIKAKKA).

Belongs to the cytochrome c oxidase VIIa family. Component of the cytochrome c oxidase (complex IV, CIV), a multisubunit enzyme composed of 12 subunits. The complex is composed of a catalytic core of 3 subunits COX1, COX2 and COX3, encoded in the mitochondrial DNA, and 9 supernumerary subunits COX4, COX5A (or COX5B), COX6, COX7, COX8, COX9, COX12, COX13 and COX26, which are encoded in the nuclear genome. The complex exists as a monomer or a dimer and forms supercomplexes (SCs) in the inner mitochondrial membrane with a dimer of ubiquinol-cytochrome c oxidoreductase (cytochrome b-c1 complex, complex III, CIII), resulting in 2 different assemblies (supercomplexes III(2)IV and III(2)IV(2)).

The protein localises to the mitochondrion inner membrane. It functions in the pathway energy metabolism; oxidative phosphorylation. In terms of biological role, component of the cytochrome c oxidase, the last enzyme in the mitochondrial electron transport chain which drives oxidative phosphorylation. The respiratory chain contains 3 multisubunit complexes succinate dehydrogenase (complex II, CII), ubiquinol-cytochrome c oxidoreductase (cytochrome b-c1 complex, complex III, CIII) and cytochrome c oxidase (complex IV, CIV), that cooperate to transfer electrons derived from NADH and succinate to molecular oxygen, creating an electrochemical gradient over the inner membrane that drives transmembrane transport and the ATP synthase. Cytochrome c oxidase is the component of the respiratory chain that catalyzes the reduction of oxygen to water. Electrons originating from reduced cytochrome c in the intermembrane space (IMS) are transferred via the dinuclear copper A center (CU(A)) of COX2 and heme A of COX1 to the active site in COX1, a binuclear center (BNC) formed by heme A3 and copper B (CU(B)). The BNC reduces molecular oxygen to 2 water molecules using 4 electrons from cytochrome c in the IMS and 4 protons from the mitochondrial matrix. The chain is Cytochrome c oxidase subunit 7, mitochondrial (COX7) from Saccharomyces cerevisiae (strain ATCC 204508 / S288c) (Baker's yeast).